A 310-amino-acid polypeptide reads, in one-letter code: Methionyl-tRNA formyltransferase (310 aa).

109 to 112 (SLLP) provides a ligand contact to (6S)-5,6,7,8-tetrahydrofolate.

Belongs to the Fmt family.

It carries out the reaction L-methionyl-tRNA(fMet) + (6R)-10-formyltetrahydrofolate = N-formyl-L-methionyl-tRNA(fMet) + (6S)-5,6,7,8-tetrahydrofolate + H(+). Its function is as follows. Attaches a formyl group to the free amino group of methionyl-tRNA(fMet). The formyl group appears to play a dual role in the initiator identity of N-formylmethionyl-tRNA by promoting its recognition by IF2 and preventing the misappropriation of this tRNA by the elongation apparatus. The sequence is that of Methionyl-tRNA formyltransferase from Pseudomonas putida (strain ATCC 47054 / DSM 6125 / CFBP 8728 / NCIMB 11950 / KT2440).